The sequence spans 446 residues: Exodeoxyribonuclease 7 large subunit (446 aa).

The protein belongs to the XseA family. In terms of assembly, heterooligomer composed of large and small subunits.

The protein localises to the cytoplasm. The catalysed reaction is Exonucleolytic cleavage in either 5'- to 3'- or 3'- to 5'-direction to yield nucleoside 5'-phosphates.. Bidirectionally degrades single-stranded DNA into large acid-insoluble oligonucleotides, which are then degraded further into small acid-soluble oligonucleotides. This is Exodeoxyribonuclease 7 large subunit from Vibrio cholerae serotype O1 (strain ATCC 39315 / El Tor Inaba N16961).